A 339-amino-acid chain; its full sequence is Erlin-2 (339 aa).

Residues 1–3 are Cytoplasmic-facing; that stretch reads MAQ. The helical transmembrane segment at 4 to 24 threads the bilayer; that stretch reads LGAVVAVASSFFCASLFSAVH. Topologically, residues 25–339 are lumenal; that stretch reads KIEEGHIGVY…EPLETATKEN (315 aa). A glycan (N-linked (GlcNAc...) asparagine) is linked at N106. An interaction with ERLIN1 region spans residues 177–309; the sequence is EAIRRNYELM…DIPNMFMDSA (133 aa). K267 bears the N6-acetyllysine mark.

Belongs to the band 7/mec-2 family. As to quaternary structure, forms a heteromeric complex with ERLIN1. In complex with ERLIN1, interacts with RNF170. Interacts with activated ITPR1, independently of the degree of ITPR1 polyubiquitination. Interacts with SCAP, INSIG1, SREBF1 and SREBF2 under cholesterol sufficiency conditions; indicative for an association with the SCAP-SREBP-INSIG complex. Probably part of an AMFR/gp78 and INSIG1-containing ubiquitin ligase complex involved in ERAD of HMGCR. Interacts with TMUB1; TMUB1 bridges the association with AMFR. Interacts with SYVN1 and RNF139. Interacts with TMEM259. Interacts with TMEM41B. In terms of processing, deubiquitinated by USP25; leading to stabilization. Ubiquitous.

The protein resides in the endoplasmic reticulum membrane. In terms of biological role, component of the ERLIN1/ERLIN2 complex which mediates the endoplasmic reticulum-associated degradation (ERAD) of inositol 1,4,5-trisphosphate receptors (IP3Rs) such as ITPR1. Promotes sterol-accelerated ERAD of HMGCR probably implicating an AMFR/gp78-containing ubiquitin ligase complex. Involved in regulation of cellular cholesterol homeostasis by regulation the SREBP signaling pathway. May promote ER retention of the SCAP-SREBF complex. The sequence is that of Erlin-2 (ERLIN2) from Homo sapiens (Human).